The sequence spans 209 residues: Uracil phosphoribosyltransferase (209 aa).

Residues Arg79, Arg104, and Asp131–Ser139 each bind 5-phospho-alpha-D-ribose 1-diphosphate. Uracil-binding positions include Ile194 and Gly199–Ala201. Asp200 contacts 5-phospho-alpha-D-ribose 1-diphosphate.

Belongs to the UPRTase family. It depends on Mg(2+) as a cofactor.

The catalysed reaction is UMP + diphosphate = 5-phospho-alpha-D-ribose 1-diphosphate + uracil. It functions in the pathway pyrimidine metabolism; UMP biosynthesis via salvage pathway; UMP from uracil: step 1/1. With respect to regulation, allosterically activated by GTP. Catalyzes the conversion of uracil and 5-phospho-alpha-D-ribose 1-diphosphate (PRPP) to UMP and diphosphate. The protein is Uracil phosphoribosyltransferase of Pediococcus pentosaceus (strain ATCC 25745 / CCUG 21536 / LMG 10740 / 183-1w).